Reading from the N-terminus, the 464-residue chain is Pup--protein ligase (464 aa).

Glutamate 14 lines the Mg(2+) pocket. Arginine 58 contacts ATP. Residue tyrosine 60 participates in Mg(2+) binding. Aspartate 62 serves as the catalytic Proton acceptor. Glutamate 68 serves as a coordination point for Mg(2+). Positions 71 and 430 each coordinate ATP.

It belongs to the Pup ligase/Pup deamidase family. Pup-conjugating enzyme subfamily.

It catalyses the reaction ATP + [prokaryotic ubiquitin-like protein]-L-glutamate + [protein]-L-lysine = ADP + phosphate + N(6)-([prokaryotic ubiquitin-like protein]-gamma-L-glutamyl)-[protein]-L-lysine.. It participates in protein degradation; proteasomal Pup-dependent pathway. The protein operates within protein modification; protein pupylation. Functionally, catalyzes the covalent attachment of the prokaryotic ubiquitin-like protein modifier Pup to the proteasomal substrate proteins, thereby targeting them for proteasomal degradation. This tagging system is termed pupylation. The ligation reaction involves the side-chain carboxylate of the C-terminal glutamate of Pup and the side-chain amino group of a substrate lysine. This Micrococcus luteus (strain ATCC 4698 / DSM 20030 / JCM 1464 / CCM 169 / CCUG 5858 / IAM 1056 / NBRC 3333 / NCIMB 9278 / NCTC 2665 / VKM Ac-2230) (Micrococcus lysodeikticus) protein is Pup--protein ligase.